Here is a 646-residue protein sequence, read N- to C-terminus: DNA mismatch repair protein MutL (646 aa).

Disordered regions lie at residues 356 to 380 (FENR…NENS) and 415 to 452 (TKNS…AKPH). Low complexity predominate over residues 424–436 (SEATSNEAASAEI).

It belongs to the DNA mismatch repair MutL/HexB family.

Functionally, this protein is involved in the repair of mismatches in DNA. It is required for dam-dependent methyl-directed DNA mismatch repair. May act as a 'molecular matchmaker', a protein that promotes the formation of a stable complex between two or more DNA-binding proteins in an ATP-dependent manner without itself being part of a final effector complex. The sequence is that of DNA mismatch repair protein MutL from Staphylococcus carnosus (strain TM300).